The primary structure comprises 422 residues: Mitochondrial distribution and morphology protein 12 (422 aa).

Positions 1 to 386 (MSFDINWNQL…WPSWICIDMN (386 aa)) constitute an SMP-LTD domain. Disordered regions lie at residues 74-134 (GATN…HDLG) and 387-422 (DDGD…THEV). 2 stretches are compositionally biased toward acidic residues: residues 109–130 (FDDD…EYDD) and 387–401 (DDGD…EDSN). A compositionally biased stretch (basic and acidic residues) spans 405–422 (GDGKDNDGKHGDGPTHEV).

This sequence belongs to the MDM12 family. As to quaternary structure, component of the ER-mitochondria encounter structure (ERMES) or MDM complex, composed of MMM1, MDM10, MDM12 and MDM34. An MMM1 homodimer associates with one molecule of MDM12 on each side in a pairwise head-to-tail manner, and the SMP-LTD domains of MMM1 and MDM12 generate a continuous hydrophobic tunnel for phospholipid trafficking.

The protein resides in the mitochondrion outer membrane. It is found in the endoplasmic reticulum membrane. Functionally, component of the ERMES/MDM complex, which serves as a molecular tether to connect the endoplasmic reticulum (ER) and mitochondria. Components of this complex are involved in the control of mitochondrial shape and protein biogenesis, and function in nonvesicular lipid trafficking between the ER and mitochondria. MDM12 is required for the interaction of the ER-resident membrane protein MMM1 and the outer mitochondrial membrane-resident beta-barrel protein MDM10. The MDM12-MMM1 subcomplex functions in the major beta-barrel assembly pathway that is responsible for biogenesis of all mitochondrial outer membrane beta-barrel proteins, and acts in a late step after the SAM complex. The MDM10-MDM12-MMM1 subcomplex further acts in the TOM40-specific pathway after the action of the MDM12-MMM1 complex. Essential for establishing and maintaining the structure of mitochondria and maintenance of mtDNA nucleoids. The protein is Mitochondrial distribution and morphology protein 12 of Candida dubliniensis (strain CD36 / ATCC MYA-646 / CBS 7987 / NCPF 3949 / NRRL Y-17841) (Yeast).